Here is a 596-residue protein sequence, read N- to C-terminus: ATP-dependent RNA helicase dbp3 (596 aa).

Positions 1–17 (MPKRTLEDTELNPRDNY) are enriched in basic and acidic residues. 2 disordered regions span residues 1 to 87 (MPKR…ESTS) and 115 to 139 (EEKV…QNGT). Residues 21–30 (SSKKSRKEKR) show a composition bias toward basic residues. The stretch at 47–120 (IDIEVESKEA…KEGKEEKVDI (74 aa)) forms a coiled coil. Polar residues predominate over residues 123–139 (STDSATPISVAPQQNGT). The Q motif motif lies at 180–207 (IKFDYLPITDSAQRAPFKDFKAPTPIQA). The 177-residue stretch at 210-386 (WPFLLAGRDV…STFMTSPVKI (177 aa)) folds into the Helicase ATP-binding domain. ATP is bound at residue 223 to 230 (AETGSGKT). The DEAD box motif lies at 332 to 335 (DEAD). The 150-residue stretch at 417–566 (RLMQLLKQYQ…PVPDELLKFG (150 aa)) folds into the Helicase C-terminal domain.

It belongs to the DEAD box helicase family. DDX5/DBP2 subfamily.

It localises to the nucleus. The protein localises to the nucleolus. The catalysed reaction is ATP + H2O = ADP + phosphate + H(+). In terms of biological role, ATP-dependent RNA helicase required for 60S ribosomal subunit synthesis. Involved in efficient pre-rRNA processing, predominantly at site A3, which is necessary for the normal formation of 25S and 5.8S rRNAs. This Sclerotinia sclerotiorum (strain ATCC 18683 / 1980 / Ss-1) (White mold) protein is ATP-dependent RNA helicase dbp3 (dbp3).